The primary structure comprises 427 residues: Light-independent protochlorophyllide reductase subunit N (427 aa).

Residues Cys28, Cys53, and Cys114 each coordinate [4Fe-4S] cluster.

This sequence belongs to the BchN/ChlN family. As to quaternary structure, protochlorophyllide reductase is composed of three subunits; BchL, BchN and BchB. Forms a heterotetramer of two BchB and two BchN subunits. Requires [4Fe-4S] cluster as cofactor.

The catalysed reaction is chlorophyllide a + oxidized 2[4Fe-4S]-[ferredoxin] + 2 ADP + 2 phosphate = protochlorophyllide a + reduced 2[4Fe-4S]-[ferredoxin] + 2 ATP + 2 H2O. It participates in porphyrin-containing compound metabolism; bacteriochlorophyll biosynthesis (light-independent). In terms of biological role, component of the dark-operative protochlorophyllide reductase (DPOR) that uses Mg-ATP and reduced ferredoxin to reduce ring D of protochlorophyllide (Pchlide) to form chlorophyllide a (Chlide). This reaction is light-independent. The NB-protein (BchN-BchB) is the catalytic component of the complex. This chain is Light-independent protochlorophyllide reductase subunit N, found in Dinoroseobacter shibae (strain DSM 16493 / NCIMB 14021 / DFL 12).